Consider the following 156-residue polypeptide: Ribonuclease 7 (156 aa).

An N-terminal signal peptide occupies residues 1-28 (MAPARAGFCPLLLLLLLGLWVAEIPVSA). The segment at 29-32 (KPKG) is important for antibacterial activity. The Proton acceptor role is filled by His-43. Residues His-43, Lys-66, Asn-69, and Thr-70 each coordinate dUMP. Disulfide bonds link Cys-51–Cys-109, Cys-65–Cys-119, Cys-83–Cys-134, and Cys-90–Cys-97. A glycan (N-linked (GlcNAc...) asparagine) is linked at Asn-127. Residues 139-140 (KK) are important for antibacterial activity. Residues His-151 and Arg-154 each contribute to the dUMP site. His-151 acts as the Proton donor in catalysis.

In terms of tissue distribution, expressed in collecting ducts in kidney, and in apical uroepithelium in bladder (at protein level). Expressed in various epithelial tissues including skin, respiratory tract, genito-urinary tract and, at a low level, in the gut. Expressed in liver, kidney, skeletal muscle and heart.

The protein resides in the secreted. Its function is as follows. Exhibits a potent RNase activity. Has broad-spectrum antimicrobial activity against many pathogenic microorganisms including uropathogenic E.coli (UPEC), and remarkably potent activity (lethal dose of 90% &lt; 30 nM) against a vancomycin resistant Enterococcus faecium. Causes loss of bacterial membrane integrity. Probably contributes to urinary tract sterility. Bactericidal activity is independent of RNase activity. The polypeptide is Ribonuclease 7 (RNASE7) (Homo sapiens (Human)).